The following is a 444-amino-acid chain: Glutamyl-tRNA reductase (444 aa).

Residues 49 to 52 (TCNR), Ser-109, 114 to 116 (ETQ), and Gln-120 each bind substrate. Catalysis depends on Cys-50, which acts as the Nucleophile. 189–194 (GAGKMG) contributes to the NADP(+) binding site.

This sequence belongs to the glutamyl-tRNA reductase family. As to quaternary structure, homodimer.

The catalysed reaction is (S)-4-amino-5-oxopentanoate + tRNA(Glu) + NADP(+) = L-glutamyl-tRNA(Glu) + NADPH + H(+). The protein operates within porphyrin-containing compound metabolism; protoporphyrin-IX biosynthesis; 5-aminolevulinate from L-glutamyl-tRNA(Glu): step 1/2. Functionally, catalyzes the NADPH-dependent reduction of glutamyl-tRNA(Glu) to glutamate 1-semialdehyde (GSA). This is Glutamyl-tRNA reductase from Bacillus cereus (strain ZK / E33L).